We begin with the raw amino-acid sequence, 707 residues long: Golgin candidate 1 (707 aa).

At 1–664 (MASWLKAAED…RATRFLWRYP (664 aa)) the chain is on the cytoplasmic side. 3 disordered regions span residues 22 to 106 (VVED…EIHP), 121 to 196 (VADT…SKRD), and 234 to 256 (QEPKVPVTSTNLKREQDRRADTT). Over residues 38–47 (SGRKGSQGKR) the composition is skewed to low complexity. Basic and acidic residues predominate over residues 56 to 67 (VKEESSNKRDSS). Positions 68 to 80 (GDQSGPGVSQSEV) are enriched in polar residues. Residues 83–95 (SKSSVSTDETSSS) show a composition bias toward low complexity. Composition is skewed to basic and acidic residues over residues 139 to 150 (DGDRSESKHADG), 185 to 196 (TQRELDDSSKRD), and 245 to 254 (LKREQDRRAD). Coiled coils occupy residues 287 to 424 (RVCA…NATK) and 452 to 608 (ADER…KSRV). A helical; Signal-anchor for type II membrane protein transmembrane segment spans residues 665–685 (IARMFLLFYLVFVHLFLMYLI). The Lumenal segment spans residues 686–707 (HRLQEQAEAQEVAAMTNNVFRL).

The protein localises to the golgi apparatus membrane. Functionally, golgi matrix protein playing a role in tethering of vesicles to Golgi membranes and in maintaining the overall structure of the Golgi apparatus. In Arabidopsis thaliana (Mouse-ear cress), this protein is Golgin candidate 1 (GC1).